Here is a 113-residue protein sequence, read N- to C-terminus: T cell receptor alpha variable 5 (113 aa).

The N-terminal stretch at M1 to G22 is a signal peptide. One can recognise an Ig-like domain in the interval E23–S113. N42 carries an N-linked (GlcNAc...) asparagine glycan. C43 and C110 are disulfide-bonded.

Alpha-beta TR is a heterodimer composed of an alpha and beta chain; disulfide-linked. The alpha-beta TR is associated with the transmembrane signaling CD3 coreceptor proteins to form the TR-CD3 (TcR or TCR). The assembly of alpha-beta TR heterodimers with CD3 occurs in the endoplasmic reticulum where a single alpha-beta TR heterodimer associates with one CD3D-CD3E heterodimer, one CD3G-CD3E heterodimer and one CD247 homodimer forming a stable octameric structure. CD3D-CD3E and CD3G-CD3E heterodimers preferentially associate with TR alpha and TR beta chains, respectively. The association of the CD247 homodimer is the last step of TcR assembly in the endoplasmic reticulum and is required for transport to the cell surface.

It localises to the cell membrane. Its function is as follows. V region of the variable domain of T cell receptor (TR) alpha chain that participates in the antigen recognition. Alpha-beta T cell receptors are antigen specific receptors which are essential to the immune response and are present on the cell surface of T lymphocytes. Recognize peptide-major histocompatibility (MH) (pMH) complexes that are displayed by antigen presenting cells (APC), a prerequisite for efficient T cell adaptive immunity against pathogens. Binding of alpha-beta TR to pMH complex initiates TR-CD3 clustering on the cell surface and intracellular activation of LCK that phosphorylates the ITAM motifs of CD3G, CD3D, CD3E and CD247 enabling the recruitment of ZAP70. In turn ZAP70 phosphorylates LAT, which recruits numerous signaling molecules to form the LAT signalosome. The LAT signalosome propagates signal branching to three major signaling pathways, the calcium, the mitogen-activated protein kinase (MAPK) kinase and the nuclear factor NF-kappa-B (NF-kB) pathways, leading to the mobilization of transcription factors that are critical for gene expression and essential for T cell growth and differentiation. The T cell repertoire is generated in the thymus, by V-(D)-J rearrangement. This repertoire is then shaped by intrathymic selection events to generate a peripheral T cell pool of self-MH restricted, non-autoaggressive T cells. Post-thymic interaction of alpha-beta TR with the pMH complexes shapes TR structural and functional avidity. The sequence is that of T cell receptor alpha variable 5 from Homo sapiens (Human).